Consider the following 260-residue polypeptide: DNA repair protein RecO (260 aa).

It belongs to the RecO family.

Its function is as follows. Involved in DNA repair and RecF pathway recombination. In Salinibacter ruber (strain DSM 13855 / M31), this protein is DNA repair protein RecO.